We begin with the raw amino-acid sequence, 429 residues long: Histidine--tRNA ligase (429 aa).

The protein belongs to the class-II aminoacyl-tRNA synthetase family. In terms of assembly, homodimer.

Its subcellular location is the cytoplasm. The enzyme catalyses tRNA(His) + L-histidine + ATP = L-histidyl-tRNA(His) + AMP + diphosphate + H(+). In Pseudomonas paraeruginosa (strain DSM 24068 / PA7) (Pseudomonas aeruginosa (strain PA7)), this protein is Histidine--tRNA ligase.